The primary structure comprises 215 residues: Cytochrome b6 (215 aa).

Residues 1–31 lie on the Cytoplasmic side of the membrane; that stretch reads MANVYDWFQERLEIQALADDVTSKYVPPHVN. Residues 32–52 traverse the membrane as a helical segment; it reads IFYCLGGITLTCFLIQFATGF. Position 35 (Cys35) interacts with heme c. The Lumenal, thylakoid portion of the chain corresponds to 53 to 89; that stretch reads AMTFYYKPTVTEAYASVQYIMNEVSFGWLIRSIHRWS. The heme b site is built by Arg83, His86, His100, and Arg103. A helical membrane pass occupies residues 90–110; sequence ASMMVLMMILHVFRVYLTGGF. Residues 111–115 lie on the Cytoplasmic side of the membrane; it reads KKPRE. A helical transmembrane segment spans residues 116-136; the sequence is LTWISGVILAVITVSFGVTGY. The Lumenal, thylakoid portion of the chain corresponds to 137–185; it reads SLPWDQVGYWAVKIVSGVPEAIPVVGVLISDLLRGGSSVGQATLTRYYS. The helical transmembrane segment at 186–206 threads the bilayer; sequence AHTFVLPWLIAVFMLLHFLMI. Positions 187 and 202 each coordinate heme b. The Cytoplasmic segment spans residues 207 to 215; that stretch reads RKQGISGPL. A heme c-binding site is contributed by Lys208.

The protein belongs to the cytochrome b family. PetB subfamily. The 4 large subunits of the cytochrome b6-f complex are cytochrome b6, subunit IV (17 kDa polypeptide, PetD), cytochrome f and the Rieske protein, while the 4 small subunits are PetG, PetL, PetM and PetN. The complex functions as a dimer. Heme b is required as a cofactor. Heme c serves as cofactor.

The protein localises to the cellular thylakoid membrane. Its function is as follows. Component of the cytochrome b6-f complex, which mediates electron transfer between photosystem II (PSII) and photosystem I (PSI), cyclic electron flow around PSI, and state transitions. This is Cytochrome b6 from Mastigocladus laminosus (Fischerella sp.).